A 65-amino-acid chain; its full sequence is Crotamine (65 aa).

Residues 1-22 (MKILYLLFAFLFLAFLSEPGNA) form the signal peptide. Short sequence motifs (nuclear localization signal) lie at residues 24-40 (KQCH…EKIC) and 49-61 (KMDC…CCKK). Disulfide bonds link Cys-26-Cys-58, Cys-33-Cys-52, and Cys-40-Cys-59.

It belongs to the crotamine-myotoxin family. Monomer. In terms of tissue distribution, expressed by the venom gland.

It is found in the secreted. Its function is as follows. Cationic peptide that possesses multiple functions. It acts as a cell-penetrating peptide (CPP), and as a potent voltage-gated potassium channel inhibitor. It exhibits antimicrobial activities, hind limb paralysis, and severe muscle necrosis by a non-enzymatic mechanism. As a cell-penetrating peptide, crotamine has high specificity for actively proliferating cells, and interacts inside the cell with subcellular and subnuclear structures, like vesicular compartments, chromosomes and centrioles. It penetrates into the cells as fast as five minutes after its addition to cell culture medium. In vivo, after intraperitoneal administration, it is found in cells of peritoneal fluid and bone marrow, demonstrating preferential nuclear and perinuclear localization. To enter the cell, it interacts with the chains of heparan sulfate membrane proteoglycan (HSPG), and is endocytosed (in complex with HSPG) in vesicles which are transported into the cell with the help of clathrin. Inside the cell, crotamine accumulates in lysosomal vesicles. As soon as the peptide accumulates in endosomes/lysosomes vesicles, these compartments are disrupted and their contents released into the cytosol. This loss of lysosomal content induces cell death at high concentrations, or promotes the distribution of crotamine in cytoplasmic compartments, which is a step before crotamine nuclear uptake. As a potassium channel inhibitor, this toxin selectively inhibits Kv1.1/KCNA1, Kv1.2/KCNA2 and Kv1.3/KCNA3 channels with an IC(50) of 369, 386 and 287 nM, respectively. The inhibition of Kv1.3/KCNA channels induced by this toxin occurs rapidly and is voltage-independent. The channel inhibition is reversible after washing, suggesting a pure and classical channel blockage effect, without effects in potassium channel kinetics. As an antimicrobial peptide, crotamine shows antibacterial activity against E.coli and B.subtilis, and antifungal activity against Candida spp., Trichosporon spp. and C.neoformans. It kills bacteria through membrane permeabilization. This Crotalus durissus terrificus (South American rattlesnake) protein is Crotamine (CRO2).